The following is a 125-amino-acid chain: Multifunctional methyltransferase subunit TRM112-like protein (125 aa).

A TRM112 domain is found at 2 to 121 (KLFVHNFMSS…RDGIPNMLKV (120 aa)).

The protein belongs to the TRM112 family.

It is found in the nucleus. The protein resides in the nucleoplasm. It localises to the cytoplasm. Its subcellular location is the perinuclear region. Its function is as follows. Acts as an activator of both RNA and protein methyltransferases. This chain is Multifunctional methyltransferase subunit TRM112-like protein, found in Caenorhabditis elegans.